The chain runs to 100 residues: Aspartyl/glutamyl-tRNA(Asn/Gln) amidotransferase subunit C (100 aa).

It belongs to the GatC family. In terms of assembly, heterotrimer of A, B and C subunits.

It catalyses the reaction L-glutamyl-tRNA(Gln) + L-glutamine + ATP + H2O = L-glutaminyl-tRNA(Gln) + L-glutamate + ADP + phosphate + H(+). The catalysed reaction is L-aspartyl-tRNA(Asn) + L-glutamine + ATP + H2O = L-asparaginyl-tRNA(Asn) + L-glutamate + ADP + phosphate + 2 H(+). Functionally, allows the formation of correctly charged Asn-tRNA(Asn) or Gln-tRNA(Gln) through the transamidation of misacylated Asp-tRNA(Asn) or Glu-tRNA(Gln) in organisms which lack either or both of asparaginyl-tRNA or glutaminyl-tRNA synthetases. The reaction takes place in the presence of glutamine and ATP through an activated phospho-Asp-tRNA(Asn) or phospho-Glu-tRNA(Gln). The chain is Aspartyl/glutamyl-tRNA(Asn/Gln) amidotransferase subunit C from Streptococcus agalactiae serotype III (strain NEM316).